The following is a 419-amino-acid chain: Endothiapepsin (419 aa).

Positions 1–20 (MSSPLKNALVTAMLAGGALS) are cleaved as a signal peptide. Positions 21–89 (SPTKQHVGIP…QNSTSGLAER (69 aa)) are cleaved as a propeptide — activation peptide. Residues 106 to 417 (YITPVQIGTP…GATTPTLGFA (312 aa)) form the Peptidase A1 domain. Residues Asp-124 and Ser-288 contribute to the active site. A disulfide bridge connects residues Cys-344 and Cys-379.

This sequence belongs to the peptidase A1 family.

It catalyses the reaction Hydrolysis of proteins with specificity similar to that of pepsin A, prefers hydrophobic residues at P1 and P1', but does not cleave 14-Ala-|-Leu-15 in the B chain of insulin or Z-Glu-Tyr. Clots milk.. This Cryphonectria parasitica (Chestnut blight fungus) protein is Endothiapepsin (EAPA).